A 142-amino-acid polypeptide reads, in one-letter code: Alpha-lactalbumin (142 aa).

The signal sequence occupies residues 1 to 19 (MRFFVPLFLVGILFPAILA). The 123-residue stretch at 20-142 (KQFTKCELSQ…KLEQWLCEKL (123 aa)) folds into the C-type lysozyme domain. Disulfide bonds link Cys-25-Cys-139, Cys-47-Cys-130, Cys-80-Cys-96, and Cys-92-Cys-110. Thr-57 and Gln-58 together coordinate Ca(2+). A glycan (N-linked (GlcNAc...) asparagine) is linked at Asn-64. A Zn(2+)-binding site is contributed by Glu-68. Asn-90 carries N-linked (GlcNAc...) asparagine; atypical; partial glycosylation. Residues Lys-98, Leu-100, Asp-101, Asp-102, Asp-103, Asp-106, and Asp-107 each coordinate Ca(2+). Glu-135 lines the Zn(2+) pocket.

It belongs to the glycosyl hydrolase 22 family. In terms of assembly, lactose synthase (LS) is a heterodimer of a catalytic component, beta1,4-galactosyltransferase (beta4Gal-T1) and a regulatory component, alpha-lactalbumin (LA). Mammary gland specific. Secreted in milk.

The protein localises to the secreted. Its function is as follows. Regulatory subunit of lactose synthase, changes the substrate specificity of galactosyltransferase in the mammary gland making glucose a good acceptor substrate for this enzyme. This enables LS to synthesize lactose, the major carbohydrate component of milk. In other tissues, galactosyltransferase transfers galactose onto the N-acetylglucosamine of the oligosaccharide chains in glycoproteins. This Homo sapiens (Human) protein is Alpha-lactalbumin (LALBA).